Here is a 268-residue protein sequence, read N- to C-terminus: CCAAT/enhancer-binding protein delta (268 aa).

3 disordered regions span residues 1–50, 98–132, and 152–223; these read MSAA…STTP, LELL…DAPG, and AAQP…QQKL. Ser-2 carries the post-translational modification N-acetylserine. Lys-120 participates in a covalent cross-link: Glycyl lysine isopeptide (Lys-Gly) (interchain with G-Cter in SUMO). A compositionally biased stretch (pro residues) spans 155–173; that stretch reads PTPPTSPEPPRGSPGPSLA. The segment covering 177 to 201 has biased composition (basic and acidic residues); it reads VREKGAGKRGPDRGSPEYRQRRERN. The bZIP domain maps to 191-254; the sequence is SPEYRQRRER…ASLRQFFKEL (64 aa). The tract at residues 195–222 is basic motif; sequence RQRRERNNIAVRKSRDKAKRRNQEMQQK. The leucine-zipper stretch occupies residues 226-254; sequence LSAENEKLHQRVEQLTRDLASLRQFFKEL.

This sequence belongs to the bZIP family. C/EBP subfamily. In terms of assembly, binds DNA as a homodimer and as a heterodimer. Can form stable heterodimers with CEBPA, CEBPB and CEBPE. Directly interacts with SPI1/PU.1; this interaction does not affect DNA-binding properties of each partner. Interacts with PRDM16. As to expression, ubiquitously expressed.

It localises to the nucleus. In terms of biological role, transcription activator that recognizes two different DNA motifs: the CCAAT homology common to many promoters and the enhanced core homology common to many enhancers. Important transcription factor regulating the expression of genes involved in immune and inflammatory responses. Transcriptional activator that enhances IL6 transcription alone and as heterodimer with CEBPB. The sequence is that of CCAAT/enhancer-binding protein delta (Cebpd) from Rattus norvegicus (Rat).